Consider the following 1358-residue polypeptide: DNA-directed RNA polymerase subunit beta (1358 aa).

Belongs to the RNA polymerase beta chain family. The RNAP catalytic core consists of 2 alpha, 1 beta, 1 beta' and 1 omega subunit. When a sigma factor is associated with the core the holoenzyme is formed, which can initiate transcription.

The enzyme catalyses RNA(n) + a ribonucleoside 5'-triphosphate = RNA(n+1) + diphosphate. Its function is as follows. DNA-dependent RNA polymerase catalyzes the transcription of DNA into RNA using the four ribonucleoside triphosphates as substrates. In Thioalkalivibrio sulfidiphilus (strain HL-EbGR7), this protein is DNA-directed RNA polymerase subunit beta.